A 274-amino-acid polypeptide reads, in one-letter code: tRNA-cytidine(32) 2-sulfurtransferase (274 aa).

The PP-loop motif signature appears at 40 to 45; that stretch reads SGGKDS. The [4Fe-4S] cluster site is built by cysteine 115, cysteine 118, and cysteine 206.

Belongs to the TtcA family. As to quaternary structure, homodimer. Requires Mg(2+) as cofactor. The cofactor is [4Fe-4S] cluster.

The protein resides in the cytoplasm. It catalyses the reaction cytidine(32) in tRNA + S-sulfanyl-L-cysteinyl-[cysteine desulfurase] + AH2 + ATP = 2-thiocytidine(32) in tRNA + L-cysteinyl-[cysteine desulfurase] + A + AMP + diphosphate + H(+). The protein operates within tRNA modification. Its function is as follows. Catalyzes the ATP-dependent 2-thiolation of cytidine in position 32 of tRNA, to form 2-thiocytidine (s(2)C32). The sulfur atoms are provided by the cysteine/cysteine desulfurase (IscS) system. The protein is tRNA-cytidine(32) 2-sulfurtransferase of Pseudomonas syringae pv. syringae (strain B728a).